Consider the following 501-residue polypeptide: Envelope glycoprotein C homolog (501 aa).

The first 27 residues, 1–27 (MLTPRVLRALGWTGLFFLLLSPSNVLG), serve as a signal peptide directing secretion. Over 28 to 465 (ASLSRDLETP…DATPSARGTP (438 aa)) the chain is Virion surface. N46 carries N-linked (GlcNAc...) asparagine; by host glycosylation. The tract at residues 53-86 (PLTEVPHAPSTESVSTNSESTNEHTITETTGKNA) is disordered. The segment covering 62–72 (STESVSTNSES) has biased composition (low complexity). N-linked (GlcNAc...) asparagine; by host glycans are attached at residues N91, N100, N120, N212, N354, N400, and N429. Positions 258 to 356 (PASVDVLAPP…GDMISTTNAT (99 aa)) constitute an Ig-like domain. The chain crosses the membrane as a helical span at residues 466–492 (MVITVTAVLGLAVILGMGIIMTALCLY). Over 493 to 501 (NSTRKNIRL) the chain is Cytoplasmic.

The protein belongs to the herpesviridae glycoprotein C family.

Its subcellular location is the secreted. It localises to the host cell membrane. Functionally, may play an immunoevasive role in the pathogenesis of Marek's disease. It is a candidate for causing the early-stage immunosuppression that occurs after MDHV infection. The sequence is that of Envelope glycoprotein C homolog (gC) from Gallus gallus (Chicken).